Reading from the N-terminus, the 1243-residue chain is Protein MMS22-like (1243 aa).

This sequence belongs to the MMS22 family. MMS22L subfamily. As to quaternary structure, component of the MMS22L-TONSL complex, a complex at least composed of MMS22L and TONSL/NFKBIL2. Interacts with RAD51; interaction is direct. In terms of processing, degraded by the ubiquitin-proteasome system upon replication stress.

It is found in the nucleus. The protein resides in the chromosome. Its function is as follows. Component of the MMS22L-TONSL complex, a complex that promotes homologous recombination-mediated repair of double-strand breaks (DSBs) at stalled or collapsed replication forks. The MMS22L-TONSL complex is required to maintain genome integrity during DNA replication. It mediates the assembly of RAD51 filaments on single-stranded DNA (ssDNA): the MMS22L-TONSL complex is recruited to DSBs following histone replacement by histone chaperones and eviction of the replication protein A complex (RPA/RP-A) from DSBs. Following recruitment to DSBs, the TONSL-MMS22L complex promotes recruitment of RAD51 filaments and subsequent homologous recombination. Within the complex, MMS22L acts by binding ssDNA. The protein is Protein MMS22-like of Homo sapiens (Human).